The sequence spans 88 residues: EMBRYO SURROUNDING FACTOR 1-like protein 3 (88 aa).

Residues 1–22 (MKLSQIALICIVIASLFAMHEC) form the signal peptide. Intrachain disulfides connect Cys-41/Cys-56, Cys-54/Cys-80, and Cys-57/Cys-67.

The protein belongs to the MEG family. Expressed in stems, leaves and flowers.

The sequence is that of EMBRYO SURROUNDING FACTOR 1-like protein 3 (ESFL3) from Arabidopsis thaliana (Mouse-ear cress).